The sequence spans 376 residues: Methionine import ATP-binding protein MetN 2 (376 aa).

The tract at residues 1 to 25 (MTATAQRQRPIDTTGAGQRAQQAEL) is disordered. Residues 34 to 273 (VRFINLGKTY…PQHEVSKTLL (240 aa)) form the ABC transporter domain. Residue 70–77 (GRSGAGKS) participates in ATP binding.

The protein belongs to the ABC transporter superfamily. Methionine importer (TC 3.A.1.24) family. In terms of assembly, the complex is composed of two ATP-binding proteins (MetN), two transmembrane proteins (MetI) and a solute-binding protein (MetQ).

Its subcellular location is the cell inner membrane. It carries out the reaction L-methionine(out) + ATP + H2O = L-methionine(in) + ADP + phosphate + H(+). The catalysed reaction is D-methionine(out) + ATP + H2O = D-methionine(in) + ADP + phosphate + H(+). Its function is as follows. Part of the ABC transporter complex MetNIQ involved in methionine import. Responsible for energy coupling to the transport system. This is Methionine import ATP-binding protein MetN 2 from Pseudomonas syringae pv. syringae (strain B728a).